A 118-amino-acid polypeptide reads, in one-letter code: Aspartate 1-decarboxylase (118 aa).

Catalysis depends on Ser-25, which acts as the Schiff-base intermediate with substrate; via pyruvic acid. At Ser-25 the chain carries Pyruvic acid (Ser). Residue Thr-57 coordinates substrate. The Proton donor role is filled by Tyr-58. 73-75 is a binding site for substrate; sequence GAA.

This sequence belongs to the PanD family. As to quaternary structure, heterooctamer of four alpha and four beta subunits. It depends on pyruvate as a cofactor. In terms of processing, is synthesized initially as an inactive proenzyme, which is activated by self-cleavage at a specific serine bond to produce a beta-subunit with a hydroxyl group at its C-terminus and an alpha-subunit with a pyruvoyl group at its N-terminus.

Its subcellular location is the cytoplasm. It carries out the reaction L-aspartate + H(+) = beta-alanine + CO2. Its pathway is cofactor biosynthesis; (R)-pantothenate biosynthesis; beta-alanine from L-aspartate: step 1/1. In terms of biological role, catalyzes the pyruvoyl-dependent decarboxylation of aspartate to produce beta-alanine. The sequence is that of Aspartate 1-decarboxylase from Leptospira biflexa serovar Patoc (strain Patoc 1 / Ames).